A 486-amino-acid polypeptide reads, in one-letter code: Membrane-bound lytic murein transglycosylase F (486 aa).

Positions 1 to 21 are cleaved as a signal peptide; sequence MKRLKINYILIGVVTLLLALA. The interval 22–268 is non-LT domain; that stretch reads LWPNITWRGG…RLEEKYLGHV (247 aa). The tract at residues 269–486 is LT domain; sequence GSFDYVDTKT…AVTPELALNF (218 aa). Glutamate 313 is a catalytic residue.

It in the N-terminal section; belongs to the bacterial solute-binding protein 3 family. The protein in the C-terminal section; belongs to the transglycosylase Slt family.

Its subcellular location is the cell outer membrane. The enzyme catalyses Exolytic cleavage of the (1-&gt;4)-beta-glycosidic linkage between N-acetylmuramic acid (MurNAc) and N-acetylglucosamine (GlcNAc) residues in peptidoglycan, from either the reducing or the non-reducing ends of the peptidoglycan chains, with concomitant formation of a 1,6-anhydrobond in the MurNAc residue.. In terms of biological role, murein-degrading enzyme that degrades murein glycan strands and insoluble, high-molecular weight murein sacculi, with the concomitant formation of a 1,6-anhydromuramoyl product. Lytic transglycosylases (LTs) play an integral role in the metabolism of the peptidoglycan (PG) sacculus. Their lytic action creates space within the PG sacculus to allow for its expansion as well as for the insertion of various structures such as secretion systems and flagella. This Serratia proteamaculans (strain 568) protein is Membrane-bound lytic murein transglycosylase F.